A 132-amino-acid chain; its full sequence is Agouti-signaling protein (132 aa).

The first 22 residues, 1–22 (MDVTRLLLATLLVFLCFFTVYS), serve as a signal peptide directing secretion. Asparagine 39 carries an N-linked (GlcNAc...) asparagine glycan. The interval 62–88 (ISRKEAEKKRSSKKEASMKKVAQPRTP) is disordered. Residues 63-79 (SRKEAEKKRSSKKEASM) are compositionally biased toward basic and acidic residues. 5 disulfide bridges follow: cysteine 93–cysteine 108, cysteine 100–cysteine 114, cysteine 107–cysteine 125, cysteine 111–cysteine 132, and cysteine 116–cysteine 123. An Agouti domain is found at 93–132 (CVATRYSCKPPAPACCDPCASCQCRFFRSACSCRVLRLNC).

It localises to the secreted. In terms of biological role, involved in the regulation of melanogenesis. The binding of ASP to MC1R precludes alpha-MSH initiated signaling and thus blocks production of cAMP, leading to a down-regulation of eumelanogenesis (brown/black pigment) and thus increasing synthesis of pheomelanin (yellow/red pigment). The sequence is that of Agouti-signaling protein (ASIP) from Semnopithecus entellus (Northern plains gray langur).